The chain runs to 85 residues: Conotoxin Cap15b (85 aa).

Positions 1–23 (MEKLTFLILVATVLLTIHVLVQS) are cleaved as a signal peptide. A propeptide spanning residues 24-49 (DGDKHLKRRPKQYATKRLSALMRGHR) is cleaved from the precursor. Q50 carries the post-translational modification Pyrrolidone carboxylic acid.

It belongs to the conotoxin O2 superfamily. Contains 4 disulfide bonds. Expressed by the venom duct.

The protein resides in the secreted. The polypeptide is Conotoxin Cap15b (Conus capitaneus (Captain cone)).